We begin with the raw amino-acid sequence, 386 residues long: 3-ketosteroid-9-alpha-monooxygenase, oxygenase component (386 aa).

Residues 26–128 (WHCLGVAKDY…TDVRSGLLFV (103 aa)) enclose the Rieske domain. The [2Fe-2S] cluster site is built by cysteine 67, histidine 69, cysteine 86, and histidine 89. Asparagine 175, histidine 181, histidine 186, and aspartate 304 together coordinate Fe cation.

In terms of assembly, homotrimer. The two-component system 3-ketosteroid-9-alpha-monooxygenase is composed of an oxygenase component KshA and a reductase component KshB. It depends on [2Fe-2S] cluster as a cofactor. The cofactor is Fe cation.

The catalysed reaction is androsta-1,4-diene-3,17-dione + 2 reduced [2Fe-2S]-[ferredoxin] + O2 + 2 H(+) = 9alpha-hydroxyandrosta-1,4-diene-3,17-dione + 2 oxidized [2Fe-2S]-[ferredoxin] + H2O. The enzyme catalyses androst-4-ene-3,17-dione + NADH + O2 + H(+) = 9alpha-hydroxy-androst-4-ene-3,17-dione + NAD(+) + H2O. It catalyses the reaction 3-oxochol-4-en-22-oate + NADH + O2 + H(+) = 9alpha-hydroxy-3-oxochol-4-en-22-oate + NAD(+) + H2O. It carries out the reaction 3-oxochola-1,4-dien-22-oate + NADH + O2 + H(+) = 9alpha-hydroxy-3-oxochola-1,4-dien-22-oate + NAD(+) + H2O. The catalysed reaction is 3-oxochol-4-en-22-oyl-CoA + NADH + O2 + H(+) = 9alpha-hydroxy-3-oxochol-4-en-22-oyl-CoA + NAD(+) + H2O. The enzyme catalyses 3-oxochola-1,4-dien-22-oyl-CoA + NADH + O2 + H(+) = 9alpha-hydroxy-3-oxochola-1,4-dien-22-oyl-CoA + NAD(+) + H2O. It participates in lipid metabolism; steroid biosynthesis. Functionally, involved in the degradation of cholesterol. Catalyzes the introduction of a 9a-hydroxyl moiety into 1,4-androstadiene-3,17-dione (ADD) to yield the 9alpha-hydroxy-1,4-androstadiene-3,17-dione (9OHADD) intermediate which spontaneously form 3-hydroxy-9,10-seconandrost-1,3,5(10)-triene-9,17-dione (HSA) via the meta-cleavage of ring B with concomitant aromatization of ring A. KSH is also able to use 4-androstene-3,17-dione (AD), 3-oxo-23,24-bisnorcholesta-4-en-22-oate (4-BNC), 3-oxo-23,24-bisnorcholesta-1,4-dien-22-oate (1,4-BNC), 3-oxo-23,24-bisnorcholesta-4-en-22-oyl-coenzyme A thioester (4-BNC-CoA) and 3-oxo-23,24-bisnorcholesta-1,4-dien-22-oyl-coenzyme A thioester (1,4-BNC-CoA) as substrates. This chain is 3-ketosteroid-9-alpha-monooxygenase, oxygenase component (kshA), found in Mycobacterium tuberculosis (strain ATCC 25618 / H37Rv).